The sequence spans 155 residues: Small ribosomal subunit protein uS7cz/uS7cy (155 aa).

The protein belongs to the universal ribosomal protein uS7 family. Part of the 30S ribosomal subunit.

Its subcellular location is the plastid. The protein localises to the chloroplast. Its function is as follows. One of the primary rRNA binding proteins, it binds directly to 16S rRNA where it nucleates assembly of the head domain of the 30S subunit. In Psilotum nudum (Whisk fern), this protein is Small ribosomal subunit protein uS7cz/uS7cy (rps7-A).